The chain runs to 110 residues: UPF0339 protein YegP (110 aa).

A run of 2 repeats spans residues 10-58 and 61-109.

The protein belongs to the UPF0339 family. Duplicated subfamily.

This Escherichia coli O157:H7 protein is UPF0339 protein YegP (yegP).